A 346-amino-acid chain; its full sequence is Biotin synthase (346 aa).

The 219-residue stretch at 38-256 (QQVQVSTLLS…IAVARIMMPT (219 aa)) folds into the Radical SAM core domain. [4Fe-4S] cluster contacts are provided by Cys-53, Cys-57, and Cys-60. [2Fe-2S] cluster is bound by residues Cys-97, Cys-128, Cys-188, and Arg-260.

The protein belongs to the radical SAM superfamily. Biotin synthase family. As to quaternary structure, homodimer. The cofactor is [4Fe-4S] cluster. It depends on [2Fe-2S] cluster as a cofactor.

It carries out the reaction (4R,5S)-dethiobiotin + (sulfur carrier)-SH + 2 reduced [2Fe-2S]-[ferredoxin] + 2 S-adenosyl-L-methionine = (sulfur carrier)-H + biotin + 2 5'-deoxyadenosine + 2 L-methionine + 2 oxidized [2Fe-2S]-[ferredoxin]. It participates in cofactor biosynthesis; biotin biosynthesis; biotin from 7,8-diaminononanoate: step 2/2. In terms of biological role, catalyzes the conversion of dethiobiotin (DTB) to biotin by the insertion of a sulfur atom into dethiobiotin via a radical-based mechanism. This chain is Biotin synthase, found in Citrobacter koseri (strain ATCC BAA-895 / CDC 4225-83 / SGSC4696).